A 232-amino-acid chain; its full sequence is LexA repressor (232 aa).

Positions Phe26–Thr46 form a DNA-binding region, H-T-H motif. Catalysis depends on for autocatalytic cleavage activity residues Ser153 and Lys191.

Belongs to the peptidase S24 family. As to quaternary structure, homodimer.

It catalyses the reaction Hydrolysis of Ala-|-Gly bond in repressor LexA.. In terms of biological role, represses a number of genes involved in the response to DNA damage (SOS response), including recA and lexA. In the presence of single-stranded DNA, RecA interacts with LexA causing an autocatalytic cleavage which disrupts the DNA-binding part of LexA, leading to derepression of the SOS regulon and eventually DNA repair. This chain is LexA repressor, found in Bradyrhizobium sp. (strain ORS 278).